Here is a 298-residue protein sequence, read N- to C-terminus: Developmental pluripotency-associated protein 2 (298 aa).

A disordered region spans residues 36–61 (NMEQMEPSVSSTSDVKLEKPKKYNPG). An SAP domain is found at 92-126 (INKVCRDTLRDWCQQLGLSTNGKKIEVYLRLHRHA).

In terms of assembly, interacts with DPPA4. Expressed in embryonic stem cells. No expression is seen in 5 months embryo, mesenchymal stem cells, embryonic fibrocytes and adult tissues.

It is found in the nucleus. Binds to target gene promoters, including NKX2-5 and SYCE1, but not GATA4, and may be involved in the maintenance of the active epigenetic status of these genes. The sequence is that of Developmental pluripotency-associated protein 2 (DPPA2) from Homo sapiens (Human).